The sequence spans 785 residues: E3 UFM1-protein ligase 1 homolog (785 aa).

The disordered stretch occupies residues 404-483 (GGNASNQLDD…GGGGSNKKSV (80 aa)).

The protein belongs to the UFL1 family.

Its function is as follows. E3 UFM1-protein ligase that mediates ufmylation of target proteins. This chain is E3 UFM1-protein ligase 1 homolog, found in Drosophila willistoni (Fruit fly).